A 209-amino-acid polypeptide reads, in one-letter code: Uracil phosphoribosyltransferase (209 aa).

Residues Arg-79, Arg-104, and 131-139 (DPMLATGGS) each bind 5-phospho-alpha-D-ribose 1-diphosphate. Uracil contacts are provided by residues Ile-194 and 199–201 (GDA). Asp-200 contacts 5-phospho-alpha-D-ribose 1-diphosphate.

This sequence belongs to the UPRTase family. Mg(2+) serves as cofactor.

It carries out the reaction UMP + diphosphate = 5-phospho-alpha-D-ribose 1-diphosphate + uracil. It functions in the pathway pyrimidine metabolism; UMP biosynthesis via salvage pathway; UMP from uracil: step 1/1. With respect to regulation, allosterically activated by GTP. In terms of biological role, catalyzes the conversion of uracil and 5-phospho-alpha-D-ribose 1-diphosphate (PRPP) to UMP and diphosphate. The chain is Uracil phosphoribosyltransferase from Geobacter sulfurreducens (strain ATCC 51573 / DSM 12127 / PCA).